Here is a 156-residue protein sequence, read N- to C-terminus: ATP synthase subunit b (156 aa).

Residues I7–P27 traverse the membrane as a helical segment.

This sequence belongs to the ATPase B chain family. As to quaternary structure, F-type ATPases have 2 components, F(1) - the catalytic core - and F(0) - the membrane proton channel. F(1) has five subunits: alpha(3), beta(3), gamma(1), delta(1), epsilon(1). F(0) has three main subunits: a(1), b(2) and c(10-14). The alpha and beta chains form an alternating ring which encloses part of the gamma chain. F(1) is attached to F(0) by a central stalk formed by the gamma and epsilon chains, while a peripheral stalk is formed by the delta and b chains.

The protein resides in the cell inner membrane. In terms of biological role, f(1)F(0) ATP synthase produces ATP from ADP in the presence of a proton or sodium gradient. F-type ATPases consist of two structural domains, F(1) containing the extramembraneous catalytic core and F(0) containing the membrane proton channel, linked together by a central stalk and a peripheral stalk. During catalysis, ATP synthesis in the catalytic domain of F(1) is coupled via a rotary mechanism of the central stalk subunits to proton translocation. Functionally, component of the F(0) channel, it forms part of the peripheral stalk, linking F(1) to F(0). This is ATP synthase subunit b from Bordetella petrii (strain ATCC BAA-461 / DSM 12804 / CCUG 43448).